Here is a 136-residue protein sequence, read N- to C-terminus: MAGKGGKGLVAAKTMAANKDKDKDKKKPISRSARAGIQFPVGRIHRQLKTRVSAHGRVGATAAVYTASILEYLTAEVLELAGNASKDLKVKRITPRHLQLAIRGDEELDTLIKGTIAGGGVIPHIHKSLINKTTKE.

Positions 1 to 35 (MAGKGGKGLVAAKTMAANKDKDKDKKKPISRSARA) are disordered. Over residues 18–27 (NKDKDKDKKK) the composition is skewed to basic and acidic residues.

This sequence belongs to the histone H2A family. As to quaternary structure, the nucleosome is a histone octamer containing two molecules each of H2A, H2B, H3 and H4 assembled in one H3-H4 heterotetramer and two H2A-H2B heterodimers. The octamer wraps approximately 147 bp of DNA.

It localises to the nucleus. The protein resides in the chromosome. In terms of biological role, variant histone H2A which may replace conventional H2A in a subset of nucleosomes. Nucleosomes wrap and compact DNA into chromatin, limiting DNA accessibility to the cellular machineries which require DNA as a template. Histones thereby play a central role in transcription regulation, DNA repair, DNA replication and chromosomal stability. DNA accessibility is regulated via a complex set of post-translational modifications of histones, also called histone code, and nucleosome remodeling. This chain is Histone H2A variant 1 (H2AV), found in Arabidopsis thaliana (Mouse-ear cress).